Here is a 310-residue protein sequence, read N- to C-terminus: ADP-L-glycero-D-manno-heptose-6-epimerase (310 aa).

NADP(+) is bound by residues 10 to 11 (FI), 31 to 32 (DN), K38, K53, 75 to 79 (EGACS), and N92. The active-site Proton acceptor is Y140. K144 lines the NADP(+) pocket. Substrate is bound at residue N169. Positions 170 and 178 each coordinate NADP(+). Catalysis depends on K178, which acts as the Proton acceptor. Substrate-binding positions include S180, H187, 201–204 (FEGS), R209, and Y272.

It belongs to the NAD(P)-dependent epimerase/dehydratase family. HldD subfamily. In terms of assembly, homopentamer. Requires NADP(+) as cofactor.

It carries out the reaction ADP-D-glycero-beta-D-manno-heptose = ADP-L-glycero-beta-D-manno-heptose. The protein operates within nucleotide-sugar biosynthesis; ADP-L-glycero-beta-D-manno-heptose biosynthesis; ADP-L-glycero-beta-D-manno-heptose from D-glycero-beta-D-manno-heptose 7-phosphate: step 4/4. Functionally, catalyzes the interconversion between ADP-D-glycero-beta-D-manno-heptose and ADP-L-glycero-beta-D-manno-heptose via an epimerization at carbon 6 of the heptose. The sequence is that of ADP-L-glycero-D-manno-heptose-6-epimerase from Salmonella newport (strain SL254).